Reading from the N-terminus, the 122-residue chain is Small ribosomal subunit protein uS13 (122 aa).

The segment at 95–122 is disordered; that stretch reads GLPVRGQRTHTNARTRKGPAKPIAGKKK.

Belongs to the universal ribosomal protein uS13 family. In terms of assembly, part of the 30S ribosomal subunit. Forms a loose heterodimer with protein S19. Forms two bridges to the 50S subunit in the 70S ribosome.

Its function is as follows. Located at the top of the head of the 30S subunit, it contacts several helices of the 16S rRNA. In the 70S ribosome it contacts the 23S rRNA (bridge B1a) and protein L5 of the 50S subunit (bridge B1b), connecting the 2 subunits; these bridges are implicated in subunit movement. Contacts the tRNAs in the A and P-sites. The sequence is that of Small ribosomal subunit protein uS13 from Rhodospirillum rubrum (strain ATCC 11170 / ATH 1.1.1 / DSM 467 / LMG 4362 / NCIMB 8255 / S1).